The following is a 101-amino-acid chain: Gamma-secretase subunit PEN-2 (101 aa).

Topologically, residues 1–17 (MNLERVSNEEKLNLCRK) are cytoplasmic. The segment at residues 18-36 (YYLGGFAFLPFLWLVNIFW) is an intramembrane region (helical). Topologically, residues 37 to 57 (FFREAFIVPAYTEQSQIKGYV) are cytoplasmic. Residues 58–78 (WRSAVGFFLWVIVLSTWITIF) form a helical membrane-spanning segment. Topologically, residues 79–101 (QIYRPRWGALGDYLSFTIPLGTP) are lumenal.

The protein belongs to the PEN-2 family. As to quaternary structure, the functional gamma-secretase complex is composed of at least four polypeptides: a presenilin homodimer (PSEN1 or PSEN2), nicastrin (NCSTN), APH1 (APH1A or APH1B) and PSENEN.

Its subcellular location is the endoplasmic reticulum membrane. The protein localises to the golgi apparatus. It localises to the golgi stack membrane. It is found in the cell membrane. The protein resides in the membrane. Functionally, essential subunit of the gamma-secretase complex, an endoprotease complex that catalyzes the intramembrane cleavage of integral membrane proteins such as Notch receptors and APP (amyloid-beta precursor protein). The gamma-secretase complex plays a role in Notch and Wnt signaling cascades and regulation of downstream processes via its role in processing key regulatory proteins, and by regulating cytosolic CTNNB1 levels. PSENEN modulates both endoproteolysis of presenilin and gamma-secretase activity. This chain is Gamma-secretase subunit PEN-2 (PSENEN), found in Bos taurus (Bovine).